Consider the following 507-residue polypeptide: Probable bifunctional methylthioribulose-1-phosphate dehydratase/enolase-phosphatase E1 (507 aa).

An N-acetylalanine modification is found at A2. The tract at residues 2–237 (AVAAAAMIGL…AIKLHQLGLD (236 aa)) is methylthioribulose-1-phosphate dehydratase. C109 provides a ligand contact to substrate. The Zn(2+) site is built by H127 and H129. The Proton donor/acceptor role is filled by E152. Residue H202 participates in Zn(2+) binding. Residues 268-507 (IVLDIEGTTT…FKTVTSFSQI (240 aa)) are enolase-phosphatase E1. The Mg(2+) site is built by D271 and E273. Residues 406 to 407 (SS) and K440 contribute to the substrate site. D466 contributes to the Mg(2+) binding site.

In the N-terminal section; belongs to the aldolase class II family. MtnB subfamily. This sequence in the C-terminal section; belongs to the HAD-like hydrolase superfamily. MasA/MtnC family. Zn(2+) serves as cofactor. Mg(2+) is required as a cofactor.

The catalysed reaction is 5-(methylsulfanyl)-D-ribulose 1-phosphate = 5-methylsulfanyl-2,3-dioxopentyl phosphate + H2O. It carries out the reaction 5-methylsulfanyl-2,3-dioxopentyl phosphate + H2O = 1,2-dihydroxy-5-(methylsulfanyl)pent-1-en-3-one + phosphate. It functions in the pathway amino-acid biosynthesis; L-methionine biosynthesis via salvage pathway; L-methionine from S-methyl-5-thio-alpha-D-ribose 1-phosphate: step 2/6. It participates in amino-acid biosynthesis; L-methionine biosynthesis via salvage pathway; L-methionine from S-methyl-5-thio-alpha-D-ribose 1-phosphate: step 3/6. The protein operates within amino-acid biosynthesis; L-methionine biosynthesis via salvage pathway; L-methionine from S-methyl-5-thio-alpha-D-ribose 1-phosphate: step 4/6. In Arabidopsis thaliana (Mouse-ear cress), this protein is Probable bifunctional methylthioribulose-1-phosphate dehydratase/enolase-phosphatase E1.